A 339-amino-acid chain; its full sequence is GTP 3',8-cyclase (339 aa).

One can recognise a Radical SAM core domain in the interval 20–241; the sequence is NFDRKFEYLR…WTQKQSLSHD (222 aa). R29 serves as a coordination point for GTP. Residues C36 and C40 each coordinate [4Fe-4S] cluster. Position 42 (Y42) interacts with S-adenosyl-L-methionine. C43 serves as a coordination point for [4Fe-4S] cluster. R78 is a GTP binding site. G82 is a binding site for S-adenosyl-L-methionine. Residue T109 participates in GTP binding. An S-adenosyl-L-methionine-binding site is contributed by S133. K170 is a GTP binding site. M204 lines the S-adenosyl-L-methionine pocket. Positions 267 and 270 each coordinate [4Fe-4S] cluster. Position 272 to 274 (272 to 274) interacts with GTP; the sequence is RLR. C284 contributes to the [4Fe-4S] cluster binding site.

The protein belongs to the radical SAM superfamily. MoaA family. Monomer and homodimer. The cofactor is [4Fe-4S] cluster.

The enzyme catalyses GTP + AH2 + S-adenosyl-L-methionine = (8S)-3',8-cyclo-7,8-dihydroguanosine 5'-triphosphate + 5'-deoxyadenosine + L-methionine + A + H(+). The protein operates within cofactor biosynthesis; molybdopterin biosynthesis. Its function is as follows. Catalyzes the cyclization of GTP to (8S)-3',8-cyclo-7,8-dihydroguanosine 5'-triphosphate. This Psychromonas ingrahamii (strain DSM 17664 / CCUG 51855 / 37) protein is GTP 3',8-cyclase.